Reading from the N-terminus, the 335-residue chain is Flagellar P-ring protein (335 aa).

Positions Met1–Ala17 are cleaved as a signal peptide.

Belongs to the FlgI family. As to quaternary structure, the basal body constitutes a major portion of the flagellar organelle and consists of four rings (L,P,S, and M) mounted on a central rod.

It is found in the periplasm. The protein resides in the bacterial flagellum basal body. Assembles around the rod to form the L-ring and probably protects the motor/basal body from shearing forces during rotation. The chain is Flagellar P-ring protein from Borreliella burgdorferi (strain ZS7) (Borrelia burgdorferi).